Here is a 557-residue protein sequence, read N- to C-terminus: Alpha-glucosidase (557 aa).

D201 acts as the Nucleophile in catalysis. The active-site Proton donor is the E256.

Belongs to the glycosyl hydrolase 13 family.

It carries out the reaction Hydrolysis of terminal, non-reducing (1-&gt;4)-linked alpha-D-glucose residues with release of alpha-D-glucose.. This is Alpha-glucosidase (agl) from Pediococcus pentosaceus.